The chain runs to 94 residues: MFVDDNSLIIYSTWPSTLSDSSGRVIVMPDNRSFTFKEGFKLDESIKSILLVNPSSIDLLKIRVYKHRIKWMGDIFVLFEQENIPPPFRLVNDK.

This sequence belongs to the orthopoxvirus OPG142 family. In terms of assembly, part of a complex composed of the kinase OPG054, OPG092, OPG100, OPG114, OPG115, OPG142 and OPG157.

It is found in the host cytoplasm. Its subcellular location is the virion. Functionally, late protein which is a part of a large complex required for early virion morphogenesis. This complex participates in the formation of virosomes and the incorporation of virosomal contents into nascent immature virions. Required for the stability and kinase activity of OPG054. The protein is Core protein OPG142 (OPG142) of Vaccinia virus (strain Ankara) (VACV).